The chain runs to 141 residues: Hemoglobin subunit alpha (141 aa).

The 141-residue stretch at 1–141 (VLSSTDKSNV…VSTVLTSKYR (141 aa)) folds into the Globin domain. Phosphoserine is present on Ser-3. Residues Lys-7 and Lys-11 each carry the N6-succinyllysine modification. Position 16 is an N6-acetyllysine; alternate (Lys-16). At Lys-16 the chain carries N6-succinyllysine; alternate. Tyr-24 carries the phosphotyrosine modification. A Phosphoserine modification is found at Ser-35. Residue Lys-40 is modified to N6-succinyllysine. His-58 contacts O2. Residue His-87 participates in heme b binding. At Ser-102 the chain carries Phosphoserine. At Thr-108 the chain carries Phosphothreonine. Ser-124 and Ser-131 each carry phosphoserine. Phosphothreonine is present on residues Thr-134 and Thr-137. Position 138 is a phosphoserine (Ser-138).

The protein belongs to the globin family. In terms of assembly, heterotetramer of two alpha chains and two beta chains. As to expression, red blood cells.

Its function is as follows. Involved in oxygen transport from the lung to the various peripheral tissues. Hemopressin acts as an antagonist peptide of the cannabinoid receptor CNR1. Hemopressin-binding efficiently blocks cannabinoid receptor CNR1 and subsequent signaling. This Pteropus poliocephalus (Grey-headed flying fox) protein is Hemoglobin subunit alpha (HBA).